The following is an 865-amino-acid chain: Protein translocase subunit SecA (865 aa).

ATP contacts are provided by residues Gln-93, 111-115, and Asp-501; that span reads GEGKT. The Zn(2+) site is built by Cys-841, Cys-843, Cys-852, and Cys-853.

It belongs to the SecA family. As to quaternary structure, monomer and homodimer. Part of the essential Sec protein translocation apparatus which comprises SecA, SecYEG and auxiliary proteins SecDF-YajC and YidC. It depends on Zn(2+) as a cofactor.

It is found in the cell inner membrane. The protein resides in the cytoplasm. The catalysed reaction is ATP + H2O + cellular proteinSide 1 = ADP + phosphate + cellular proteinSide 2.. Functionally, part of the Sec protein translocase complex. Interacts with the SecYEG preprotein conducting channel. Has a central role in coupling the hydrolysis of ATP to the transfer of proteins into and across the cell membrane, serving as an ATP-driven molecular motor driving the stepwise translocation of polypeptide chains across the membrane. The protein is Protein translocase subunit SecA of Helicobacter acinonychis (strain Sheeba).